Reading from the N-terminus, the 188-residue chain is M-phase phosphoprotein 6 homolog (188 aa).

The tract at residues E93–N188 is disordered. The segment covering L120–E149 has biased composition (basic and acidic residues). Phosphoserine is present on S167. A compositionally biased stretch (basic residues) spans R174–N188.

It belongs to the MPP6 family. In terms of assembly, associates with the RNA exosome complex.

Its subcellular location is the nucleus. Functionally, RNA-binding protein that associates with the RNA exosome complex. In Schizosaccharomyces pombe (strain 972 / ATCC 24843) (Fission yeast), this protein is M-phase phosphoprotein 6 homolog.